A 163-amino-acid polypeptide reads, in one-letter code: IQ domain-containing protein F2 (163 aa).

2 consecutive IQ domains span residues 42 to 71 (RVIAAKKIQAWWRGTLVRRTLLHAALSTWI) and 98 to 127 (RERAVVKLQSLVRMWRIHWRYCQVLNAIYV).

This is IQ domain-containing protein F2 (IQCF2) from Bos taurus (Bovine).